Reading from the N-terminus, the 137-residue chain is Large ribosomal subunit protein uL16c (137 aa).

The protein belongs to the universal ribosomal protein uL16 family. Part of the 50S ribosomal subunit.

It is found in the plastid. The protein localises to the chloroplast. The sequence is that of Large ribosomal subunit protein uL16c from Vigna unguiculata (Cowpea).